A 471-amino-acid polypeptide reads, in one-letter code: Proline--tRNA ligase (471 aa).

The protein belongs to the class-II aminoacyl-tRNA synthetase family. ProS type 3 subfamily. In terms of assembly, homodimer.

The protein localises to the cytoplasm. It catalyses the reaction tRNA(Pro) + L-proline + ATP = L-prolyl-tRNA(Pro) + AMP + diphosphate. In terms of biological role, catalyzes the attachment of proline to tRNA(Pro) in a two-step reaction: proline is first activated by ATP to form Pro-AMP and then transferred to the acceptor end of tRNA(Pro). This is Proline--tRNA ligase from Archaeoglobus fulgidus (strain ATCC 49558 / DSM 4304 / JCM 9628 / NBRC 100126 / VC-16).